The sequence spans 790 residues: Kinesin-like protein KIF9 (790 aa).

Positions 6-340 (KVQAFVRVRP…LRFASRMKLV (335 aa)) constitute a Kinesin motor domain. ATP-binding positions include 12-14 (RVR) and 93-100 (GQTGAGKT). The stretch at 342 to 442 (TEPAINEKYD…EQEVESALRR (101 aa)) forms a coiled coil. The disordered stretch occupies residues 482–521 (GVAPFSVKPGKKPKTKKTPKDQFSSSARKEGASSPVSGKD). Thr530 carries the phosphothreonine modification. A disordered region spans residues 547–577 (RERETSSIEPLISDSPKEELRAPRPSTPPSR). Residues 600–695 (KSILNERKKR…YCQRLVDQCR (96 aa)) are a coiled coil.

The protein belongs to the TRAFAC class myosin-kinesin ATPase superfamily. Kinesin family. As to quaternary structure, interacts with HYDIN. In terms of tissue distribution, highly expressed in the testis (at protein level). Weakly expressed in the brain, thymus, lung and heart.

It is found in the cytoplasm. The protein resides in the cytoskeleton. It localises to the cell projection. Its subcellular location is the cilium. The protein localises to the flagellum. It is found in the flagellum axoneme. Its function is as follows. Essential for normal male fertility and for progressive motility of spermatozoa. The sequence is that of Kinesin-like protein KIF9 (Kif9) from Mus musculus (Mouse).